Reading from the N-terminus, the 337-residue chain is Anthranilate phosphoribosyltransferase (337 aa).

Residues Gly-78, 81-82, Thr-86, 88-91, 106-114, and Ser-118 each bind 5-phospho-alpha-D-ribose 1-diphosphate; these read GD, NIST, and KHGNRSVSS. Residue Gly-78 coordinates anthranilate. Position 90 (Ser-90) interacts with Mg(2+). Asn-109 provides a ligand contact to anthranilate. Arg-164 lines the anthranilate pocket. 2 residues coordinate Mg(2+): Asp-222 and Glu-223.

It belongs to the anthranilate phosphoribosyltransferase family. In terms of assembly, homodimer. Requires Mg(2+) as cofactor.

The enzyme catalyses N-(5-phospho-beta-D-ribosyl)anthranilate + diphosphate = 5-phospho-alpha-D-ribose 1-diphosphate + anthranilate. It functions in the pathway amino-acid biosynthesis; L-tryptophan biosynthesis; L-tryptophan from chorismate: step 2/5. Functionally, catalyzes the transfer of the phosphoribosyl group of 5-phosphorylribose-1-pyrophosphate (PRPP) to anthranilate to yield N-(5'-phosphoribosyl)-anthranilate (PRA). This Idiomarina loihiensis (strain ATCC BAA-735 / DSM 15497 / L2-TR) protein is Anthranilate phosphoribosyltransferase.